The chain runs to 553 residues: Telomere repeat-binding protein 2 (553 aa).

The disordered stretch occupies residues 147–170 (SSTEVGACGNGSPNESRDDVNLFS). A Ubiquitin-like domain is found at 285–364 (VKLRIKSFRV…HLDSLGFSLE (80 aa)). A disordered region spans residues 394–413 (ALDSSHEPEPSPADSFGKLG). An HTH myb-type domain is found at 448-507 (AQRRIRRPFSVTEVEALVQAVEKLGTGRWRDVKVRAFEDADHRTYVDLKDKWKTLVHTAR). Positions 476 to 503 (WRDVKVRAFEDADHRTYVDLKDKWKTLV) form a DNA-binding region, H-T-H motif.

As to quaternary structure, homodimer and heterodimer with TRP1. Interacts with SNL1. As to expression, expressed ubiquitously. Highest expression in flowers and leaves.

It localises to the nucleus. In terms of biological role, binds specifically to the plant telomeric double-stranded DNA sequences. At least 2 repeats of telomeric sequences are required for binding. Induces DNA bending. This Arabidopsis thaliana (Mouse-ear cress) protein is Telomere repeat-binding protein 2 (TRP2).